We begin with the raw amino-acid sequence, 315 residues long: Probable cell division protein WhiA (315 aa).

A DNA-binding region (H-T-H motif) is located at residues 275–309 (NLKELGEMVPSGVVSKSGINHRLRKINEIADKIRE).

Belongs to the WhiA family.

In terms of biological role, involved in cell division and chromosome segregation. This chain is Probable cell division protein WhiA, found in Brevibacillus brevis (strain 47 / JCM 6285 / NBRC 100599).